Consider the following 847-residue polypeptide: Leucine--tRNA ligase (847 aa).

Positions 41–51 (PYPSGRIHMGH) match the 'HIGH' region motif. The 'KMSKS' region signature appears at 619–623 (KMSKS). An ATP-binding site is contributed by Lys-622.

It belongs to the class-I aminoacyl-tRNA synthetase family.

The protein resides in the cytoplasm. It catalyses the reaction tRNA(Leu) + L-leucine + ATP = L-leucyl-tRNA(Leu) + AMP + diphosphate. This Cereibacter sphaeroides (strain KD131 / KCTC 12085) (Rhodobacter sphaeroides) protein is Leucine--tRNA ligase.